A 123-amino-acid chain; its full sequence is Large ribosomal subunit protein uL18 (123 aa).

It belongs to the universal ribosomal protein uL18 family. As to quaternary structure, part of the 50S ribosomal subunit; part of the 5S rRNA/L5/L18/L25 subcomplex. Contacts the 5S and 23S rRNAs.

In terms of biological role, this is one of the proteins that bind and probably mediate the attachment of the 5S RNA into the large ribosomal subunit, where it forms part of the central protuberance. The protein is Large ribosomal subunit protein uL18 of Protochlamydia amoebophila (strain UWE25).